A 105-amino-acid chain; its full sequence is PTS system lactose-specific EIIA component (105 aa).

Positions 4-102 constitute a PTS EIIA type-3 domain; sequence EEMTLLGFEI…IHHLIELYKR (99 aa). Catalysis depends on His78, which acts as the Tele-phosphohistidine intermediate. The residue at position 78 (His78) is a Phosphohistidine; by HPr. Asp81 contributes to the Mg(2+) binding site.

Homotrimer. Requires Mg(2+) as cofactor.

It is found in the cytoplasm. Its function is as follows. The phosphoenolpyruvate-dependent sugar phosphotransferase system (sugar PTS), a major carbohydrate active transport system, catalyzes the phosphorylation of incoming sugar substrates concomitantly with their translocation across the cell membrane. The enzyme II LacEF PTS system is involved in lactose transport. In Lactococcus lactis subsp. lactis (Streptococcus lactis), this protein is PTS system lactose-specific EIIA component.